Reading from the N-terminus, the 660-residue chain is Bifunctional polymyxin resistance protein ArnA (660 aa).

Residues 1 to 304 form a formyltransferase ArnAFT region; sequence MKTVVFAYHD…TLGLVQGSRL (304 aa). A (6R)-10-formyltetrahydrofolate-binding site is contributed by 86–88; it reads HLI. His-104 (proton donor; for formyltransferase activity) is an active-site residue. (6R)-10-formyltetrahydrofolate contacts are provided by residues Arg-114 and 136 to 140; that span reads VKRAD. The interval 314–660 is dehydrogenase ArnADH; sequence RRTRVLILGV…RTVDLTDKPS (347 aa). NAD(+)-binding positions include Asp-347 and 368–369; that span reads DI. UDP-alpha-D-glucuronate contacts are provided by residues Ala-393, Tyr-398, and 432–433; that span reads TS. Catalysis depends on Glu-434, which acts as the Proton acceptor; for decarboxylase activity. Residues Arg-460, Asn-492, 526-535, and Tyr-613 contribute to the UDP-alpha-D-glucuronate site; that span reads KLIDGGKQKR. Arg-619 functions as the Proton donor; for decarboxylase activity in the catalytic mechanism.

The protein in the N-terminal section; belongs to the Fmt family. UDP-L-Ara4N formyltransferase subfamily. This sequence in the C-terminal section; belongs to the NAD(P)-dependent epimerase/dehydratase family. UDP-glucuronic acid decarboxylase subfamily. Homohexamer, formed by a dimer of trimers.

It catalyses the reaction UDP-alpha-D-glucuronate + NAD(+) = UDP-beta-L-threo-pentopyranos-4-ulose + CO2 + NADH. The catalysed reaction is UDP-4-amino-4-deoxy-beta-L-arabinose + (6R)-10-formyltetrahydrofolate = UDP-4-deoxy-4-formamido-beta-L-arabinose + (6S)-5,6,7,8-tetrahydrofolate + H(+). It participates in nucleotide-sugar biosynthesis; UDP-4-deoxy-4-formamido-beta-L-arabinose biosynthesis; UDP-4-deoxy-4-formamido-beta-L-arabinose from UDP-alpha-D-glucuronate: step 1/3. Its pathway is nucleotide-sugar biosynthesis; UDP-4-deoxy-4-formamido-beta-L-arabinose biosynthesis; UDP-4-deoxy-4-formamido-beta-L-arabinose from UDP-alpha-D-glucuronate: step 3/3. The protein operates within bacterial outer membrane biogenesis; lipopolysaccharide biosynthesis. Its function is as follows. Bifunctional enzyme that catalyzes the oxidative decarboxylation of UDP-glucuronic acid (UDP-GlcUA) to UDP-4-keto-arabinose (UDP-Ara4O) and the addition of a formyl group to UDP-4-amino-4-deoxy-L-arabinose (UDP-L-Ara4N) to form UDP-L-4-formamido-arabinose (UDP-L-Ara4FN). The modified arabinose is attached to lipid A and is required for resistance to polymyxin and cationic antimicrobial peptides. The chain is Bifunctional polymyxin resistance protein ArnA from Escherichia coli (strain K12 / MC4100 / BW2952).